A 110-amino-acid chain; its full sequence is Parvalbumin alpha (110 aa).

2 consecutive EF-hand domains span residues 39-74 (KGPD…FTPN) and 78-110 (LSVK…VSES). Asp-52, Asp-54, Ser-56, Phe-58, Glu-60, Glu-63, Asp-91, Asp-93, Asp-95, Lys-97, and Glu-102 together coordinate Ca(2+).

The protein belongs to the parvalbumin family.

In terms of biological role, in muscle, parvalbumin is thought to be involved in relaxation after contraction. It binds two calcium ions. In Aquarana catesbeiana (American bullfrog), this protein is Parvalbumin alpha.